The chain runs to 243 residues: Putative C-type lectin protein A7 (243 aa).

Residues I23 to A43 traverse the membrane as a helical segment. In terms of domain architecture, C-type lectin spans G116 to G223. 2 disulfides stabilise this stretch: C137-C222 and C198-C214.

It localises to the host membrane. This Alcelaphine herpesvirus 1 (strain C500) (AlHV-1) protein is Putative C-type lectin protein A7 (A7).